A 181-amino-acid polypeptide reads, in one-letter code: Large ribosomal subunit protein uL10 (181 aa).

Belongs to the universal ribosomal protein uL10 family. As to quaternary structure, part of the ribosomal stalk of the 50S ribosomal subunit. The N-terminus interacts with L11 and the large rRNA to form the base of the stalk. The C-terminus forms an elongated spine to which L12 dimers bind in a sequential fashion forming a multimeric L10(L12)X complex.

Functionally, forms part of the ribosomal stalk, playing a central role in the interaction of the ribosome with GTP-bound translation factors. This Bradyrhizobium diazoefficiens (strain JCM 10833 / BCRC 13528 / IAM 13628 / NBRC 14792 / USDA 110) protein is Large ribosomal subunit protein uL10.